The sequence spans 424 residues: Serine hydroxymethyltransferase (424 aa).

Residues L118 and G122–L124 contribute to the (6S)-5,6,7,8-tetrahydrofolate site. K227 is modified (N6-(pyridoxal phosphate)lysine). Residue S351–F353 participates in (6S)-5,6,7,8-tetrahydrofolate binding.

It belongs to the SHMT family. As to quaternary structure, homodimer. Requires pyridoxal 5'-phosphate as cofactor.

It is found in the cytoplasm. The catalysed reaction is (6R)-5,10-methylene-5,6,7,8-tetrahydrofolate + glycine + H2O = (6S)-5,6,7,8-tetrahydrofolate + L-serine. The protein operates within one-carbon metabolism; tetrahydrofolate interconversion. It participates in amino-acid biosynthesis; glycine biosynthesis; glycine from L-serine: step 1/1. Catalyzes the reversible interconversion of serine and glycine with tetrahydrofolate (THF) serving as the one-carbon carrier. This reaction serves as the major source of one-carbon groups required for the biosynthesis of purines, thymidylate, methionine, and other important biomolecules. Also exhibits THF-independent aldolase activity toward beta-hydroxyamino acids, producing glycine and aldehydes, via a retro-aldol mechanism. This is Serine hydroxymethyltransferase from Thermosipho melanesiensis (strain DSM 12029 / CIP 104789 / BI429).